Reading from the N-terminus, the 125-residue chain is Large ribosomal subunit protein bL12 (125 aa).

This sequence belongs to the bacterial ribosomal protein bL12 family. As to quaternary structure, homodimer. Part of the ribosomal stalk of the 50S ribosomal subunit. Forms a multimeric L10(L12)X complex, where L10 forms an elongated spine to which 2 to 4 L12 dimers bind in a sequential fashion. Binds GTP-bound translation factors.

Its function is as follows. Forms part of the ribosomal stalk which helps the ribosome interact with GTP-bound translation factors. Is thus essential for accurate translation. The sequence is that of Large ribosomal subunit protein bL12 from Methylorubrum extorquens (strain CM4 / NCIMB 13688) (Methylobacterium extorquens).